The chain runs to 620 residues: Glutathione-regulated potassium-efflux system protein KefC (620 aa).

Transmembrane regions (helical) follow at residues 4-24, 26-46, 54-74, 86-106, 114-134, 149-169, 178-198, 218-238, 271-291, 296-316, 326-346, and 359-379; these read HTLIQALIYLGSAALIVPVAV, LGLGSVLGYLIAGGLIGPWGL, AILHFAEIGVVLMLFVIGLEL, VFGGGALQMGACGLLLGGFCV, VALLIGLTLALSSTAIAMQAM, FAVLLFQDIAAIPLVAMIPLL, ASAFFLSALKVVGALALVVLL, VFSAVALFLVFGFGLLLEEAG, LLLGLFFIGVGMSIDFGTLVA, VLTLLFGFLIIKTVTLWLVAK, RWFAVLLGQGSEFAFVIFGAA, and ALTLAVALSMAATPLLLVLLT. Residues 399–518 enclose the RCK N-terminal domain; that stretch reads QPRVIIAGFG…AGVAQPERET (120 aa). The disordered stretch occupies residues 596–620; that stretch reads HGWQGTREGKHTGNDADEPEVKPQP.

It belongs to the monovalent cation:proton antiporter 2 (CPA2) transporter (TC 2.A.37) family. KefC subfamily. As to quaternary structure, homodimer. Interacts with the regulatory subunit KefF.

The protein resides in the cell inner membrane. Its function is as follows. Pore-forming subunit of a potassium efflux system that confers protection against electrophiles. Catalyzes K(+)/H(+) antiport. The chain is Glutathione-regulated potassium-efflux system protein KefC from Cronobacter sakazakii (strain ATCC BAA-894) (Enterobacter sakazakii).